Reading from the N-terminus, the 61-residue chain is MAKTSMIIKAQRGSKFKVREYNRCPLCGRPRAYYRKFDMCRICLRKLASTGQIPGVIKSSW.

The Zn(2+) site is built by cysteine 24, cysteine 27, cysteine 40, and cysteine 43.

It belongs to the universal ribosomal protein uS14 family. Zinc-binding uS14 subfamily. As to quaternary structure, part of the 30S ribosomal subunit. Contacts proteins S3 and S10. It depends on Zn(2+) as a cofactor.

Its function is as follows. Binds 16S rRNA, required for the assembly of 30S particles and may also be responsible for determining the conformation of the 16S rRNA at the A site. The protein is Small ribosomal subunit protein uS14 of Geobacter metallireducens (strain ATCC 53774 / DSM 7210 / GS-15).